The primary structure comprises 283 residues: Bifunctional protein FolD (283 aa).

NADP(+) contacts are provided by residues 164 to 166 (GRS), serine 189, and isoleucine 230.

The protein belongs to the tetrahydrofolate dehydrogenase/cyclohydrolase family. As to quaternary structure, homodimer.

It catalyses the reaction (6R)-5,10-methylene-5,6,7,8-tetrahydrofolate + NADP(+) = (6R)-5,10-methenyltetrahydrofolate + NADPH. The enzyme catalyses (6R)-5,10-methenyltetrahydrofolate + H2O = (6R)-10-formyltetrahydrofolate + H(+). It functions in the pathway one-carbon metabolism; tetrahydrofolate interconversion. Functionally, catalyzes the oxidation of 5,10-methylenetetrahydrofolate to 5,10-methenyltetrahydrofolate and then the hydrolysis of 5,10-methenyltetrahydrofolate to 10-formyltetrahydrofolate. This chain is Bifunctional protein FolD, found in Lacticaseibacillus casei (strain BL23) (Lactobacillus casei).